Here is a 402-residue protein sequence, read N- to C-terminus: uncharacterized protein (402 aa).

The first 44 residues, 1 to 44 (MLEKNLLPEILLAIHMPLNKGLTRVKAIVIIIVVIIAVIAGVVG), serve as a signal peptide directing secretion. Positions 53–79 (NSVTTSSSSTTTSSSLSSTSISSSTTN) are disordered.

Belongs to the bacterial solute-binding protein 1 family. WtpA subfamily.

This is an uncharacterized protein from Saccharolobus solfataricus (strain ATCC 35092 / DSM 1617 / JCM 11322 / P2) (Sulfolobus solfataricus).